A 324-amino-acid chain; its full sequence is Beta-ketoacyl-[acyl-carrier-protein] synthase III (324 aa).

Active-site residues include Cys-112 and His-249. Residues 250-254 (QANRR) form an ACP-binding region. Residue Asn-279 is part of the active site.

Belongs to the thiolase-like superfamily. FabH family. Homodimer.

The protein resides in the cytoplasm. The catalysed reaction is malonyl-[ACP] + acetyl-CoA + H(+) = 3-oxobutanoyl-[ACP] + CO2 + CoA. Its pathway is lipid metabolism; fatty acid biosynthesis. Catalyzes the condensation reaction of fatty acid synthesis by the addition to an acyl acceptor of two carbons from malonyl-ACP. Catalyzes the first condensation reaction which initiates fatty acid synthesis and may therefore play a role in governing the total rate of fatty acid production. Possesses both acetoacetyl-ACP synthase and acetyl transacylase activities. Its substrate specificity determines the biosynthesis of branched-chain and/or straight-chain of fatty acids. The protein is Beta-ketoacyl-[acyl-carrier-protein] synthase III of Streptococcus equi subsp. zooepidemicus (strain MGCS10565).